Here is a 430-residue protein sequence, read N- to C-terminus: Chromatin assembly factor 1 p55 subunit (430 aa).

A phosphoserine mark is found at Ser-11 and Ser-100. WD repeat units lie at residues 126-159, 179-210, 229-260, 275-306, 319-350, and 376-407; these read NHEG…FDYT, GHQK…CLWD, GHTA…MIWD, AHTA…ALWD, SHKD…HVWD, and GHTA…QVWQ.

This sequence belongs to the WD repeat RBAP46/RBAP48/MSI1 family. Probably binds directly to helix 1 of the histone fold of histone H4, a region that is not accessible when H4 is in chromatin. Self associates. Associates with chromatin. Component of the CAF-1 complex, composed of Caf1-55, Caf1-105 and Caf1-180; within the CAF-1 complex, Caf1-180 interacts directly with both Caf1-55 and Caf1-105. Component of the NuRD complex, composed of at least Caf1-55, Mi-2, MTA1-like and HDAC1/Rpd3. Within the NuRD complex, Caf1-55 may interact directly with Mi-2, MTA1-like and HDAC1/Rpd3. The NuRD complex may also associate with the methyl-DNA binding protein MBD-like via Caf1-55 and Mi-2. Component of the NURF complex, composed of Caf1-55, E(bx), Nurf-38 and Iswi. Component of the polycomb repressive complex 2 (PRC2, also known as the Esc/E(Z) complex), composed of Caf1-55, esc, E(z), Su(z)12, and possibly pho. PRC2 associates with the accessory components Jarid2 and jing to form the PRC2 Jarid2-jing variant (PRC2.2). PRC2 may also associate with Pcl and HDAC1/Rpd3 during early embryogenesis. Interacts with Rbf and Rbf2. Component of the DREAM complex at least composed of Myb, Caf1-55, mip40, mip120, mip130, E2f2, Dp, Rbf, Rbf2, lin-52, HDAC1/Rpd3 and l(3)mbt.

It is found in the nucleus. Core histone-binding subunit that may target chromatin assembly factors, chromatin remodeling factors and histone deacetylases to their histone substrates in a manner that is regulated by nucleosomal DNA. Component of several complexes which regulate chromatin metabolism. These include the chromatin assembly factor 1 (CAF-1) complex, which is required for chromatin assembly following DNA replication and DNA repair; the nucleosome remodeling and deacetylase complex (the NuRD complex), which promotes transcriptional repression by histone deacetylation and nucleosome remodeling; the nucleosome remodeling factor (NURF) complex, which catalyzes ATP-dependent nucleosome sliding and facilitates transcription of chromatin; and the polycomb group (PcG) repressor complex ESC-E(Z), which promotes repression of homeotic genes during development. Also required for transcriptional repression of E2F target genes by E2f2 and Rbf or Rbf2. The protein is Chromatin assembly factor 1 p55 subunit of Drosophila melanogaster (Fruit fly).